The sequence spans 159 residues: Probable cyclic pyranopterin monophosphate synthase accessory protein (159 aa).

Asp128 is an active-site residue.

It belongs to the MoaC family.

The protein operates within cofactor biosynthesis; molybdopterin biosynthesis. In terms of biological role, together with MoaA, is involved in the conversion of 5'-GTP to cyclic pyranopterin monophosphate (cPMP or molybdopterin precursor Z). This is Probable cyclic pyranopterin monophosphate synthase accessory protein from Methanothermobacter thermautotrophicus (strain ATCC 29096 / DSM 1053 / JCM 10044 / NBRC 100330 / Delta H) (Methanobacterium thermoautotrophicum).